Consider the following 152-residue polypeptide: Transcriptional regulator MraZ (152 aa).

SpoVT-AbrB domains lie at 5–52 and 81–124; these read ANAV…PLPE and AVDL…NEDA.

It belongs to the MraZ family. In terms of assembly, forms oligomers.

The protein localises to the cytoplasm. It localises to the nucleoid. This is Transcriptional regulator MraZ from Azotobacter vinelandii (strain DJ / ATCC BAA-1303).